The sequence spans 489 residues: Long chain base biosynthesis protein 2b (489 aa).

The helical transmembrane segment at 2 to 22 (ITIPYLTAVSTYFSYGLLFAF) threads the bilayer. Lys-311 is subject to N6-(pyridoxal phosphate)lysine.

Belongs to the class-II pyridoxal-phosphate-dependent aminotransferase family. In terms of assembly, heterodimer with LCB1. Component of the serine palmitoyltransferase (SPT) complex, composed of LCB1 and LCB2 (LCB2a or LCB2b). Pyridoxal 5'-phosphate serves as cofactor. In terms of tissue distribution, ubiquitous with the highest expression in flowers.

It is found in the endoplasmic reticulum membrane. The catalysed reaction is L-serine + hexadecanoyl-CoA + H(+) = 3-oxosphinganine + CO2 + CoA. The protein operates within lipid metabolism; sphingolipid metabolism. In terms of biological role, serine palmitoyltransferase (SPT). The heterodimer formed with LCB1 constitutes the catalytic core. Plays an important role during male gametogenesis and embryogenesis. The polypeptide is Long chain base biosynthesis protein 2b (LCB2b) (Arabidopsis thaliana (Mouse-ear cress)).